A 697-amino-acid chain; its full sequence is Polyribonucleotide nucleotidyltransferase (697 aa).

Mg(2+) contacts are provided by aspartate 488 and aspartate 494. In terms of domain architecture, KH spans 555-614; it reads PTLLTLKINPDKIRDVIGKGGATIRALTEETGCTIDIEDDGSVKIYGETREKADEAVRRV. The S1 motif domain occupies 624–692; it reads GAIYEGKVTR…QRGRIKLSMK (69 aa).

Belongs to the polyribonucleotide nucleotidyltransferase family. Component of the RNA degradosome, which is a multiprotein complex involved in RNA processing and mRNA degradation. Mg(2+) is required as a cofactor.

It localises to the cytoplasm. It carries out the reaction RNA(n+1) + phosphate = RNA(n) + a ribonucleoside 5'-diphosphate. Functionally, involved in mRNA degradation. Catalyzes the phosphorolysis of single-stranded polyribonucleotides processively in the 3'- to 5'-direction. This is Polyribonucleotide nucleotidyltransferase from Alcanivorax borkumensis (strain ATCC 700651 / DSM 11573 / NCIMB 13689 / SK2).